The chain runs to 1138 residues: Mastermind-like protein 3 (1138 aa).

Positions 37–48 are enriched in polar residues; it reads PNSTPAAPSSNH. 6 disordered regions span residues 37–68, 119–148, 169–188, 207–237, 334–480, and 503–547; these read PNSTPAAPSSNHPAAGGCGGSGGPGGGSAAVP, EQRAKKSGAGTGKQQHPSKPQQDAEAASAE, RSPLNGDQQNGACDGNFSPT, PSNMPLPSASPLHQLDLKPSLPLQNSGTHTP, EEKK…QRAK, and QQQQ…PQAF. The span at 52 to 64 shows a compositional bias: gly residues; the sequence is GGCGGSGGPGGGS. Composition is skewed to polar residues over residues 130–139 and 173–188; these read GKQQHPSKPQ and NGDQQNGACDGNFSPT. Composition is skewed to polar residues over residues 343–359 and 372–394; these read QPATETPLSQESASVKS and GSPQARPSSSGPPFSTVSTATSL. Over residues 395–411 the composition is skewed to low complexity; it reads PSVASTPAAPNPASSPA. Polar residues predominate over residues 414–426; that stretch reads AVQSPQTPNQAHT. Positions 467–480 are enriched in low complexity; the sequence is QLKQMAAQQQQRAK. Lysine 603 is modified (N6-acetyllysine). Disordered stretches follow at residues 615–662, 691–721, 968–991, 1024–1084, and 1090–1109; these read RMTP…PRAH, HGQEQHPVGLPRTTGPMQSSVPPGSGGMVSG, LQGMPGRTSGELGPFNNGASYPLQ, AAMG…SQAY, and QDVSYNYSGDGAGGSFPGLP. Low complexity predominate over residues 633–649; that stretch reads QQQQQQQQQQQQQQQQQ. The segment covering 1064–1084 has biased composition (polar residues); sequence PPAQQQIPSGSFAPSSQSQAY.

Belongs to the mastermind family. As to quaternary structure, interacts through its N-terminal region with the ankyrin repeat region of the Notch proteins NOTCH1, NOTCH2, NOTCH3 and NOTCH4. Forms a DNA-binding complex with Notch proteins and RBPSUH/RBP-J kappa.

The protein resides in the nucleus speckle. Functionally, acts as a transcriptional coactivator for NOTCH proteins. Has been shown to amplify NOTCH-induced transcription of HES1. This chain is Mastermind-like protein 3, found in Homo sapiens (Human).